Reading from the N-terminus, the 240-residue chain is Ribonuclease PH (240 aa).

Residues R87 and 125 to 127 (GTR) contribute to the phosphate site.

It belongs to the RNase PH family. In terms of assembly, homohexameric ring arranged as a trimer of dimers.

It carries out the reaction tRNA(n+1) + phosphate = tRNA(n) + a ribonucleoside 5'-diphosphate. Its function is as follows. Phosphorolytic 3'-5' exoribonuclease that plays an important role in tRNA 3'-end maturation. Removes nucleotide residues following the 3'-CCA terminus of tRNAs; can also add nucleotides to the ends of RNA molecules by using nucleoside diphosphates as substrates, but this may not be physiologically important. Probably plays a role in initiation of 16S rRNA degradation (leading to ribosome degradation) during starvation. This chain is Ribonuclease PH, found in Pseudomonas syringae pv. tomato (strain ATCC BAA-871 / DC3000).